A 242-amino-acid chain; its full sequence is Biosynthetic peptidoglycan transglycosylase (242 aa).

A helical transmembrane segment spans residues 19–39; that stretch reads LMVVLAVFWGGGIALFSVAPV.

The protein belongs to the glycosyltransferase 51 family.

Its subcellular location is the cell inner membrane. The catalysed reaction is [GlcNAc-(1-&gt;4)-Mur2Ac(oyl-L-Ala-gamma-D-Glu-L-Lys-D-Ala-D-Ala)](n)-di-trans,octa-cis-undecaprenyl diphosphate + beta-D-GlcNAc-(1-&gt;4)-Mur2Ac(oyl-L-Ala-gamma-D-Glu-L-Lys-D-Ala-D-Ala)-di-trans,octa-cis-undecaprenyl diphosphate = [GlcNAc-(1-&gt;4)-Mur2Ac(oyl-L-Ala-gamma-D-Glu-L-Lys-D-Ala-D-Ala)](n+1)-di-trans,octa-cis-undecaprenyl diphosphate + di-trans,octa-cis-undecaprenyl diphosphate + H(+). It participates in cell wall biogenesis; peptidoglycan biosynthesis. Peptidoglycan polymerase that catalyzes glycan chain elongation from lipid-linked precursors. The polypeptide is Biosynthetic peptidoglycan transglycosylase (Escherichia coli O157:H7).